Reading from the N-terminus, the 332-residue chain is Glycerol-3-phosphate dehydrogenase [NAD(P)+] (332 aa).

Residues Ser11, Phe12, Lys32, and Lys106 each contribute to the NADPH site. Positions 106, 137, and 139 each coordinate sn-glycerol 3-phosphate. Ala141 is an NADPH binding site. Lys192, Asp245, Ser255, Arg256, and Asn257 together coordinate sn-glycerol 3-phosphate. The Proton acceptor role is filled by Lys192. Arg256 contacts NADPH. NADPH is bound by residues Val280 and Glu282.

This sequence belongs to the NAD-dependent glycerol-3-phosphate dehydrogenase family.

Its subcellular location is the cytoplasm. The enzyme catalyses sn-glycerol 3-phosphate + NAD(+) = dihydroxyacetone phosphate + NADH + H(+). The catalysed reaction is sn-glycerol 3-phosphate + NADP(+) = dihydroxyacetone phosphate + NADPH + H(+). It functions in the pathway membrane lipid metabolism; glycerophospholipid metabolism. Its function is as follows. Catalyzes the reduction of the glycolytic intermediate dihydroxyacetone phosphate (DHAP) to sn-glycerol 3-phosphate (G3P), the key precursor for phospholipid synthesis. This is Glycerol-3-phosphate dehydrogenase [NAD(P)+] from Staphylococcus aureus (strain Mu3 / ATCC 700698).